The primary structure comprises 277 residues: Phosphatidylglycerol--prolipoprotein diacylglyceryl transferase (277 aa).

The next 4 helical transmembrane spans lie at 18–38 (IAIY…YFMA), 54–74 (DLLV…YVIF), 91–111 (EGGI…IVFA), and 115–135 (GLSF…GQAI). Arg137 contacts a 1,2-diacyl-sn-glycero-3-phospho-(1'-sn-glycerol). The next 3 membrane-spanning stretches (helical) occupy residues 177-197 (QPTF…LLLL), 205-225 (GELF…IEGM), and 236-256 (LRTA…LWVY).

This sequence belongs to the Lgt family.

Its subcellular location is the cell membrane. The enzyme catalyses L-cysteinyl-[prolipoprotein] + a 1,2-diacyl-sn-glycero-3-phospho-(1'-sn-glycerol) = an S-1,2-diacyl-sn-glyceryl-L-cysteinyl-[prolipoprotein] + sn-glycerol 1-phosphate + H(+). It participates in protein modification; lipoprotein biosynthesis (diacylglyceryl transfer). In terms of biological role, catalyzes the transfer of the diacylglyceryl group from phosphatidylglycerol to the sulfhydryl group of the N-terminal cysteine of a prolipoprotein, the first step in the formation of mature lipoproteins. The polypeptide is Phosphatidylglycerol--prolipoprotein diacylglyceryl transferase (Shouchella clausii (strain KSM-K16) (Alkalihalobacillus clausii)).